The primary structure comprises 210 residues: MATRITNKGLSKSSKAWMKEHLDDHYVQLAQKEGYRARAAYKLLEINEKTNLIKKGMTVVDLGSAPGSWSQVAGRLVGDEGILIASDILPMDALENVTFIQGDFREEAVFDRLMSEVGDRQVDVVLSDMAPNTSGHTAVDQPRMIYLCELAVDFALRVLPKGGSLVMKVFQGEGEQQLRQQLQSQFSKVRTIKPAASRPRSKEVFWVATK.

S-adenosyl-L-methionine is bound by residues Gly-67, Trp-69, Asp-87, Asp-103, and Asp-128. Lys-168 acts as the Proton acceptor in catalysis.

It belongs to the class I-like SAM-binding methyltransferase superfamily. RNA methyltransferase RlmE family.

The protein localises to the cytoplasm. The enzyme catalyses uridine(2552) in 23S rRNA + S-adenosyl-L-methionine = 2'-O-methyluridine(2552) in 23S rRNA + S-adenosyl-L-homocysteine + H(+). Specifically methylates the uridine in position 2552 of 23S rRNA at the 2'-O position of the ribose in the fully assembled 50S ribosomal subunit. The sequence is that of Ribosomal RNA large subunit methyltransferase E from Psychrobacter sp. (strain PRwf-1).